A 477-amino-acid polypeptide reads, in one-letter code: Glycogen synthase (477 aa).

Position 15 (K15) interacts with ADP-alpha-D-glucose.

Belongs to the glycosyltransferase 1 family. Bacterial/plant glycogen synthase subfamily.

It catalyses the reaction [(1-&gt;4)-alpha-D-glucosyl](n) + ADP-alpha-D-glucose = [(1-&gt;4)-alpha-D-glucosyl](n+1) + ADP + H(+). The protein operates within glycan biosynthesis; glycogen biosynthesis. Its function is as follows. Synthesizes alpha-1,4-glucan chains using ADP-glucose. The polypeptide is Glycogen synthase (Salmonella choleraesuis (strain SC-B67)).